The primary structure comprises 110 residues: Cytochrome c oxidase subunit 4B (110 aa).

The next 3 membrane-spanning stretches (helical) occupy residues 29 to 49 (MIAF…VGYE), 55 to 75 (FVVP…LYYF), and 89 to 109 (FIYG…TVVW).

This sequence belongs to the cytochrome c oxidase bacterial subunit 4 family.

It is found in the cell membrane. The enzyme catalyses 4 Fe(II)-[cytochrome c] + O2 + 8 H(+)(in) = 4 Fe(III)-[cytochrome c] + 2 H2O + 4 H(+)(out). In Bacillus sp. (strain PS3), this protein is Cytochrome c oxidase subunit 4B (caaD).